A 211-amino-acid polypeptide reads, in one-letter code: Endo-1,4-beta-xylanase 3 (211 aa).

Positions 1 to 27 (MKVTAAFAGLLVTAFAAPVPEPVLVSR) are cleaved as a signal peptide. The 183-residue stretch at 28–210 (SAGINYVQNY…GAGSASVTIS (183 aa)) folds into the GH11 domain. The active-site Nucleophile is the E106. A disulfide bridge connects residues C119 and C138. Catalysis depends on E197, which acts as the Proton donor.

The protein belongs to the glycosyl hydrolase 11 (cellulase G) family.

The protein localises to the secreted. The catalysed reaction is Endohydrolysis of (1-&gt;4)-beta-D-xylosidic linkages in xylans.. It participates in glycan degradation; xylan degradation. This is Endo-1,4-beta-xylanase 3 (xynC) from Aspergillus kawachii (strain NBRC 4308) (White koji mold).